The following is a 557-amino-acid chain: Iron-sulfur cluster assembly SufBD family protein ABCI8, chloroplastic (557 aa).

Residues 1-47 form a disordered region; the sequence is MASLLANGISSFSPQPTSDSSKSPKGFHPKPESLKFPSPKSLNPTRP. A chloroplast-targeting transit peptide spans 1–52; the sequence is MASLLANGISSFSPQPTSDSSKSPKGFHPKPESLKFPSPKSLNPTRPIFKLR. A compositionally biased stretch (low complexity) spans 10–24; that stretch reads SSFSPQPTSDSSKSP.

Belongs to the iron-sulfur cluster assembly SufBD family.

It localises to the plastid. Its subcellular location is the chloroplast. Involved in light signaling, probably by mediating the transport and correct distribution of protoporphyrin IX, a chlorophyll precursor, in response to far-red light. The chain is Iron-sulfur cluster assembly SufBD family protein ABCI8, chloroplastic (ABCI8) from Arabidopsis thaliana (Mouse-ear cress).